A 452-amino-acid polypeptide reads, in one-letter code: MSRSRSAIILAAGQGTRMKSKTVKVLHKVAGRPMLDWAVALAGDCGASDIVTVWGAHSPAVRDAAEALGTRTALQDPPKGTGHAVLAARAALADLSGDAIVLYADTPLITAATVARVFEALEGGASVAVLGFEPDDPAAYGRLITNEAGDLDRIVEFKDASEAERAVGLVNSGVLAAPAELLFDLLGEVGNDNANGEYYLTDVVGLARARDLRAAVVVADADEVLGVNSRADLAEAEAAFQSRMRQSMMADGVTLIAPETVFFAHDTQIARDVVIEPNVVFGPGVVIEEDVVVHAHSHIAGAHLKRGAHAGPFARLRPGAELGEGSKVGNFVEIKKSQLAEGAKVSHLTYIGDASVGANANIGAGTITCNYDGYDKHRTVIGDNAFIGSNTCLVAPVTVGDGAFTATGTIVTQDVPADALALARTPQTHKPGWAARFNAAKQARKARKDSQT.

The pyrophosphorylase stretch occupies residues 1-230 (MSRSRSAIIL…ADEVLGVNSR (230 aa)). Residues 10-13 (LAAG), K24, Q75, and 80-81 (GT) contribute to the UDP-N-acetyl-alpha-D-glucosamine site. Position 105 (D105) interacts with Mg(2+). G141, E156, N171, and N228 together coordinate UDP-N-acetyl-alpha-D-glucosamine. N228 contacts Mg(2+). Positions 231 to 251 (ADLAEAEAAFQSRMRQSMMAD) are linker. The segment at 252–452 (GVTLIAPETV…ARKARKDSQT (201 aa)) is N-acetyltransferase. Positions 317 and 335 each coordinate UDP-N-acetyl-alpha-D-glucosamine. The active-site Proton acceptor is H347. UDP-N-acetyl-alpha-D-glucosamine-binding residues include Y350 and N361. Residues A364, 370-371 (NY), S389, T407, and R424 each bind acetyl-CoA.

In the N-terminal section; belongs to the N-acetylglucosamine-1-phosphate uridyltransferase family. It in the C-terminal section; belongs to the transferase hexapeptide repeat family. In terms of assembly, homotrimer. It depends on Mg(2+) as a cofactor.

The protein localises to the cytoplasm. It catalyses the reaction alpha-D-glucosamine 1-phosphate + acetyl-CoA = N-acetyl-alpha-D-glucosamine 1-phosphate + CoA + H(+). The catalysed reaction is N-acetyl-alpha-D-glucosamine 1-phosphate + UTP + H(+) = UDP-N-acetyl-alpha-D-glucosamine + diphosphate. The protein operates within nucleotide-sugar biosynthesis; UDP-N-acetyl-alpha-D-glucosamine biosynthesis; N-acetyl-alpha-D-glucosamine 1-phosphate from alpha-D-glucosamine 6-phosphate (route II): step 2/2. It functions in the pathway nucleotide-sugar biosynthesis; UDP-N-acetyl-alpha-D-glucosamine biosynthesis; UDP-N-acetyl-alpha-D-glucosamine from N-acetyl-alpha-D-glucosamine 1-phosphate: step 1/1. Its pathway is bacterial outer membrane biogenesis; LPS lipid A biosynthesis. Functionally, catalyzes the last two sequential reactions in the de novo biosynthetic pathway for UDP-N-acetylglucosamine (UDP-GlcNAc). The C-terminal domain catalyzes the transfer of acetyl group from acetyl coenzyme A to glucosamine-1-phosphate (GlcN-1-P) to produce N-acetylglucosamine-1-phosphate (GlcNAc-1-P), which is converted into UDP-GlcNAc by the transfer of uridine 5-monophosphate (from uridine 5-triphosphate), a reaction catalyzed by the N-terminal domain. The protein is Bifunctional protein GlmU of Maricaulis maris (strain MCS10) (Caulobacter maris).